The primary structure comprises 143 residues: Ribulose bisphosphate carboxylase large chain (143 aa).

Residues 1-2 (MS) constitute a propeptide that is removed on maturation. P3 bears the N-acetylproline mark. An N6,N6,N6-trimethyllysine modification is found at K14. X123 lines the substrate pocket.

This sequence belongs to the RuBisCO large chain family. Type I subfamily. In terms of assembly, heterohexadecamer of 8 large chains and 8 small chains.

The protein localises to the plastid. It is found in the chloroplast. The enzyme catalyses 2 (2R)-3-phosphoglycerate + 2 H(+) = D-ribulose 1,5-bisphosphate + CO2 + H2O. It catalyses the reaction D-ribulose 1,5-bisphosphate + O2 = 2-phosphoglycolate + (2R)-3-phosphoglycerate + 2 H(+). Its function is as follows. RuBisCO catalyzes two reactions: the carboxylation of D-ribulose 1,5-bisphosphate, the primary event in carbon dioxide fixation, as well as the oxidative fragmentation of the pentose substrate in the photorespiration process. Both reactions occur simultaneously and in competition at the same active site. The chain is Ribulose bisphosphate carboxylase large chain (rbcL) from Nemopanthus mucronatus (Catberry).